Consider the following 465-residue polypeptide: MKHIVKHIHFVGIGGAGMSGIAEVLVNLGYQVSGSDLARNAVTDRLAALGARIAIGHDAANIEGANAVVVSTAVRSDNPEVLAARAQRVPIVQRAVMLAELMRLKQGIAIAGTHGKTTTTSLVASVLAAGGLDPTFVIGGRLISAGANARLGTGDFIVAEADESDASFLNLYPVIEVITNIDADHMDTYGHDFARLKQAFIEFTQRLPFYGSAVVCVDDPNVRQIIPFISKPVVRYGLSPDAQVRAEDIDARDGRMHFTVIREGRAPLAVVLNLPGLHNVQNALAAIAIATDLGVSDDAIQQALAEFNGVGRRFQRYGDVPTADGGRYTLIDDYGHHPVEMAATIAAARGAFPGRRLVLAFQPHRYTRTRDCFDDFVNVLSTVDALVLTEVYAAGEAAIATANGDALSRALRAAGKVEPVFVETVDALPEALAKVAQDGDVVITMGAGSIGGVPAKIVQNTQQKG.

Residue 112–118 (GTHGKTT) coordinates ATP.

It belongs to the MurCDEF family.

It localises to the cytoplasm. The enzyme catalyses UDP-N-acetyl-alpha-D-muramate + L-alanine + ATP = UDP-N-acetyl-alpha-D-muramoyl-L-alanine + ADP + phosphate + H(+). Its pathway is cell wall biogenesis; peptidoglycan biosynthesis. In terms of biological role, cell wall formation. The chain is UDP-N-acetylmuramate--L-alanine ligase from Burkholderia multivorans (strain ATCC 17616 / 249).